The sequence spans 424 residues: Enolase (424 aa).

Residue Q162 participates in (2R)-2-phosphoglycerate binding. E204 acts as the Proton donor in catalysis. Residues D241, E284, and D311 each contribute to the Mg(2+) site. Residues K336, R365, S366, and K387 each contribute to the (2R)-2-phosphoglycerate site. K336 serves as the catalytic Proton acceptor.

The protein belongs to the enolase family. It depends on Mg(2+) as a cofactor.

It localises to the cytoplasm. The protein resides in the secreted. It is found in the cell surface. The catalysed reaction is (2R)-2-phosphoglycerate = phosphoenolpyruvate + H2O. Its pathway is carbohydrate degradation; glycolysis; pyruvate from D-glyceraldehyde 3-phosphate: step 4/5. Functionally, catalyzes the reversible conversion of 2-phosphoglycerate (2-PG) into phosphoenolpyruvate (PEP). It is essential for the degradation of carbohydrates via glycolysis. The chain is Enolase from Sinorhizobium fredii (strain NBRC 101917 / NGR234).